A 356-amino-acid chain; its full sequence is Naringenin,2-oxoglutarate 3-dioxygenase (356 aa).

One can recognise a Fe2OG dioxygenase domain in the interval 188–292 (CVDMDQKVVV…RLSIATFQNP (105 aa)). The Fe cation site is built by histidine 215, aspartate 217, and histidine 273. Arginine 283 lines the 2-oxoglutarate pocket.

This sequence belongs to the iron/ascorbate-dependent oxidoreductase family. Fe(2+) is required as a cofactor. Requires L-ascorbate as cofactor.

It carries out the reaction a (2S)-flavan-4-one + 2-oxoglutarate + O2 = a (2R,3R)-dihydroflavonol + succinate + CO2. It participates in secondary metabolite biosynthesis; flavonoid biosynthesis. Catalyzes the 3-beta-hydroxylation of 2S-flavanones to 2R,3R-dihydroflavonols which are intermediates in the biosynthesis of flavonols, anthocyanidins, catechins and proanthocyanidins in plants. In Callistephus chinensis (China aster), this protein is Naringenin,2-oxoglutarate 3-dioxygenase (FHT).